We begin with the raw amino-acid sequence, 313 residues long: WD repeat-containing protein 82-B (313 aa).

6 WD repeats span residues 19–58 (ENSD…PKRT), 105–144 (GHSK…CQGL), 146–184 (HLQG…KGPF), 192–231 (DRTC…VMHT), 236–276 (NNSK…KVAV), and 280–313 (KHTG…TIDD).

It belongs to the WD repeat SWD2 family. Component of the SET1/COMPASS complex. Component of the PNUTS-PP1 phosphatase complex.

The protein resides in the nucleus. The protein localises to the chromosome. Its subcellular location is the cytoplasm. In terms of biological role, regulatory component of the SET1/COMPASS complex implicated in the tethering of this complex to transcriptional start sites of active genes. Facilitates histone H3 'Lys-4' methylation (H3K4me) via recruitment of the SETD1A or SETD1B to the 'Ser-5' phosphorylated C-terminal domain (CTD) of RNA polymerase II large subunit (POLR2A). Component of the PNUTS-PP1 protein phosphatase complex, a protein phosphatase 1 (PP1) complex that promotes RNA polymerase II transcription pause-release, allowing transcription elongation. The polypeptide is WD repeat-containing protein 82-B (wdr82-b) (Xenopus laevis (African clawed frog)).